We begin with the raw amino-acid sequence, 200 residues long: Histone H1 (200 aa).

Low complexity predominate over residues 1–14 (MPPKKAPTTAKKAA). 2 disordered regions span residues 1–20 (MPPKKAPTTAKKAASGPTHT) and 78–200 (DFIQ…NKKA). The H15 domain occupies 18–93 (THTSYRDMIK…GTSGPVKLAK (76 aa)). Residues 94–116 (KQAPAKPAPKKPATTTKTAAPKK) are compositionally biased toward low complexity. Positions 120–131 (KKADKAEKAEKP) are enriched in basic and acidic residues. A compositionally biased stretch (low complexity) spans 159–185 (TAAPAVVDKPKVVSVTKSGRKTTTTAK).

It belongs to the histone H1/H5 family.

Its subcellular location is the nucleus. The protein localises to the chromosome. Its function is as follows. Could act as an H1-type linker histone. The protein is Histone H1 (hhoA) of Emericella nidulans (strain FGSC A4 / ATCC 38163 / CBS 112.46 / NRRL 194 / M139) (Aspergillus nidulans).